A 289-amino-acid chain; its full sequence is Ferri-bacillibactin esterase BesA (289 aa).

Catalysis depends on charge relay system residues serine 163, glutamate 225, and histidine 263.

The protein belongs to the esterase D family.

The protein localises to the cytoplasm. In terms of biological role, catalyzes the hydrolysis of the trilactone cycle of ferri-bacillibactin (ferri-BB) complex, leading to the formation of bacillibactin monomers and to cytosolic iron release, thus making iron available for metabolic use. Can also hydrolyze bacillibactin (BB), however the catalytic efficiency for ferri-BB hydrolysis is much higher than for BB. The protein is Ferri-bacillibactin esterase BesA (besA) of Bacillus subtilis (strain 168).